Here is a 447-residue protein sequence, read N- to C-terminus: Eukaryotic translation initiation factor 3 subunit E (447 aa).

Residues leucine 253–serine 421 form the PCI domain.

It belongs to the eIF-3 subunit E family. Component of the eukaryotic translation initiation factor 3 (eIF-3) complex.

It is found in the cytoplasm. In terms of biological role, component of the eukaryotic translation initiation factor 3 (eIF-3) complex, which is involved in protein synthesis of a specialized repertoire of mRNAs and, together with other initiation factors, stimulates binding of mRNA and methionyl-tRNAi to the 40S ribosome. The eIF-3 complex specifically targets and initiates translation of a subset of mRNAs involved in cell proliferation. The polypeptide is Eukaryotic translation initiation factor 3 subunit E (Chaetomium globosum (strain ATCC 6205 / CBS 148.51 / DSM 1962 / NBRC 6347 / NRRL 1970) (Soil fungus)).